A 100-amino-acid polypeptide reads, in one-letter code: Urease subunit gamma (100 aa).

Belongs to the urease gamma subunit family. In terms of assembly, heterotrimer of UreA (gamma), UreB (beta) and UreC (alpha) subunits. Three heterotrimers associate to form the active enzyme.

The protein resides in the cytoplasm. The enzyme catalyses urea + 2 H2O + H(+) = hydrogencarbonate + 2 NH4(+). It participates in nitrogen metabolism; urea degradation; CO(2) and NH(3) from urea (urease route): step 1/1. The chain is Urease subunit gamma from Cupriavidus pinatubonensis (strain JMP 134 / LMG 1197) (Cupriavidus necator (strain JMP 134)).